Consider the following 130-residue polypeptide: Small ribosomal subunit protein uS9 (130 aa).

It belongs to the universal ribosomal protein uS9 family.

This is Small ribosomal subunit protein uS9 from Geobacillus thermodenitrificans (strain NG80-2).